Here is a 180-residue protein sequence, read N- to C-terminus: Nucleoside-triphosphatase THEP1 (180 aa).

Residues 18-25 (GRPGVGKT) and 104-111 (LVIMDEIG) contribute to the ATP site.

The protein belongs to the THEP1 NTPase family.

The enzyme catalyses a ribonucleoside 5'-triphosphate + H2O = a ribonucleoside 5'-diphosphate + phosphate + H(+). Its function is as follows. Has nucleotide phosphatase activity towards ATP, GTP, CTP, TTP and UTP. May hydrolyze nucleoside diphosphates with lower efficiency. The sequence is that of Nucleoside-triphosphatase THEP1 from Metallosphaera sedula (strain ATCC 51363 / DSM 5348 / JCM 9185 / NBRC 15509 / TH2).